We begin with the raw amino-acid sequence, 107 residues long: Urease subunit beta (107 aa).

The protein belongs to the urease beta subunit family. Heterotrimer of UreA (gamma), UreB (beta) and UreC (alpha) subunits. Three heterotrimers associate to form the active enzyme.

Its subcellular location is the cytoplasm. It carries out the reaction urea + 2 H2O + H(+) = hydrogencarbonate + 2 NH4(+). It participates in nitrogen metabolism; urea degradation; CO(2) and NH(3) from urea (urease route): step 1/1. The sequence is that of Urease subunit beta from Janthinobacterium sp. (strain Marseille) (Minibacterium massiliensis).